We begin with the raw amino-acid sequence, 990 residues long: Putative ariadne-like RING finger protein R811 (990 aa).

The VWFA domain maps to 8-201 (DLAIVVDATG…IITQTTIKLL (194 aa)). The segment at 797–990 (EKGLCMICFN…GGAFEYDQDD (194 aa)) is TRIAD supradomain. The Zn(2+) site is built by Cys-801, Cys-804, Cys-827, and Cys-830. An RING-type 1 zinc finger spans residues 801–854 (CMICFNEFSKSNLRQICGRKVCQSVACYDCMKSWYGENKVGDLIHVNALTCPFC). The IBR-type zinc finger occupies 855–903 (KQCPMFNILAAFNRQVCAMVRTNNSFDIDWWYGWCLKCFQPKKVVEKEC). 2 residues coordinate Zn(2+): Cys-930 and Cys-935. An RING-type 2; atypical zinc finger spans residues 930 to 961 (CPNSLCKIPIIKDGGCNHMECTACKKHFCWLC). Cys-945 is an active-site residue. 2 residues coordinate Zn(2+): Cys-950 and Cys-953.

The polypeptide is Putative ariadne-like RING finger protein R811 (Acanthamoeba polyphaga (Amoeba)).